We begin with the raw amino-acid sequence, 283 residues long: Thymidylate synthase (283 aa).

Position 22 (Arg22) interacts with dUMP. Catalysis depends on Cys160, which acts as the Nucleophile. Residues 180–183 (RSCD), Asn191, and 221–223 (HIY) each bind dUMP. (6R)-5,10-methylene-5,6,7,8-tetrahydrofolate is bound at residue Asp183. Ala282 is a (6R)-5,10-methylene-5,6,7,8-tetrahydrofolate binding site.

It belongs to the thymidylate synthase family. Bacterial-type ThyA subfamily. As to quaternary structure, homodimer.

Its subcellular location is the cytoplasm. The enzyme catalyses dUMP + (6R)-5,10-methylene-5,6,7,8-tetrahydrofolate = 7,8-dihydrofolate + dTMP. It functions in the pathway pyrimidine metabolism; dTTP biosynthesis. Catalyzes the reductive methylation of 2'-deoxyuridine-5'-monophosphate (dUMP) to 2'-deoxythymidine-5'-monophosphate (dTMP) while utilizing 5,10-methylenetetrahydrofolate (mTHF) as the methyl donor and reductant in the reaction, yielding dihydrofolate (DHF) as a by-product. This enzymatic reaction provides an intracellular de novo source of dTMP, an essential precursor for DNA biosynthesis. This is Thymidylate synthase from Shewanella frigidimarina (strain NCIMB 400).